The primary structure comprises 349 residues: Fe(3+) ions import ATP-binding protein FbpC (349 aa).

In terms of domain architecture, ABC transporter spans 4–236; the sequence is LELHHIGKSY…PVDEPTATFL (233 aa). 36-43 contacts ATP; sequence GPSGSGKT.

It belongs to the ABC transporter superfamily. Fe(3+) ion importer (TC 3.A.1.10) family. The complex is composed of two ATP-binding proteins (FbpC), two transmembrane proteins (FbpB) and a solute-binding protein (FbpA).

Its subcellular location is the cell inner membrane. The catalysed reaction is Fe(3+)(out) + ATP + H2O = Fe(3+)(in) + ADP + phosphate + H(+). In terms of biological role, part of the ABC transporter complex FbpABC involved in Fe(3+) ions import. Responsible for energy coupling to the transport system. This chain is Fe(3+) ions import ATP-binding protein FbpC, found in Yersinia pestis bv. Antiqua (strain Antiqua).